A 197-amino-acid chain; its full sequence is dITP/XTP pyrophosphatase (197 aa).

11-16 (SHNAGK) is a binding site for substrate. Residues Glu42 and Asp71 each coordinate Mg(2+). Residue Asp71 is the Proton acceptor of the active site. Substrate-binding positions include Ser72, 155 to 158 (FGYD), Lys178, and 183 to 184 (HR).

Belongs to the HAM1 NTPase family. In terms of assembly, homodimer. Mg(2+) serves as cofactor.

The enzyme catalyses XTP + H2O = XMP + diphosphate + H(+). It catalyses the reaction dITP + H2O = dIMP + diphosphate + H(+). The catalysed reaction is ITP + H2O = IMP + diphosphate + H(+). Functionally, pyrophosphatase that catalyzes the hydrolysis of nucleoside triphosphates to their monophosphate derivatives, with a high preference for the non-canonical purine nucleotides XTP (xanthosine triphosphate), dITP (deoxyinosine triphosphate) and ITP. Seems to function as a house-cleaning enzyme that removes non-canonical purine nucleotides from the nucleotide pool, thus preventing their incorporation into DNA/RNA and avoiding chromosomal lesions. This chain is dITP/XTP pyrophosphatase, found in Pseudomonas aeruginosa (strain ATCC 15692 / DSM 22644 / CIP 104116 / JCM 14847 / LMG 12228 / 1C / PRS 101 / PAO1).